Reading from the N-terminus, the 614-residue chain is tRNA uridine 5-carboxymethylaminomethyl modification enzyme MnmG (614 aa).

Residue 10–15 (GAGHAG) coordinates FAD. 271–285 (GPRYCPSIEDKIVKF) provides a ligand contact to NAD(+).

This sequence belongs to the MnmG family. In terms of assembly, homodimer. Heterotetramer of two MnmE and two MnmG subunits. The cofactor is FAD.

It is found in the cytoplasm. NAD-binding protein involved in the addition of a carboxymethylaminomethyl (cmnm) group at the wobble position (U34) of certain tRNAs, forming tRNA-cmnm(5)s(2)U34. In Ureaplasma parvum serovar 3 (strain ATCC 27815 / 27 / NCTC 11736), this protein is tRNA uridine 5-carboxymethylaminomethyl modification enzyme MnmG.